The chain runs to 157 residues: 2-C-methyl-D-erythritol 2,4-cyclodiphosphate synthase (157 aa).

2 residues coordinate a divalent metal cation: aspartate 8 and histidine 10. 4-CDP-2-C-methyl-D-erythritol 2-phosphate contacts are provided by residues 8–10 (DVH) and 34–35 (HS). Residue histidine 42 coordinates a divalent metal cation. 4-CDP-2-C-methyl-D-erythritol 2-phosphate-binding positions include 56–58 (DIG), 132–135 (TTNE), and arginine 142.

The protein belongs to the IspF family. As to quaternary structure, homotrimer. Requires a divalent metal cation as cofactor.

It carries out the reaction 4-CDP-2-C-methyl-D-erythritol 2-phosphate = 2-C-methyl-D-erythritol 2,4-cyclic diphosphate + CMP. The protein operates within isoprenoid biosynthesis; isopentenyl diphosphate biosynthesis via DXP pathway; isopentenyl diphosphate from 1-deoxy-D-xylulose 5-phosphate: step 4/6. In terms of biological role, involved in the biosynthesis of isopentenyl diphosphate (IPP) and dimethylallyl diphosphate (DMAPP), two major building blocks of isoprenoid compounds. Catalyzes the conversion of 4-diphosphocytidyl-2-C-methyl-D-erythritol 2-phosphate (CDP-ME2P) to 2-C-methyl-D-erythritol 2,4-cyclodiphosphate (ME-CPP) with a corresponding release of cytidine 5-monophosphate (CMP). The sequence is that of 2-C-methyl-D-erythritol 2,4-cyclodiphosphate synthase from Chlorobaculum tepidum (strain ATCC 49652 / DSM 12025 / NBRC 103806 / TLS) (Chlorobium tepidum).